The sequence spans 67 residues: Large ribosomal subunit protein uL29 (67 aa).

It belongs to the universal ribosomal protein uL29 family. In terms of assembly, part of the 50S ribosomal subunit. Contacts protein L23 and trigger factor when it is complexed with the ribosome.

Its function is as follows. Binds the 23S rRNA. One of the proteins that surrounds the polypeptide exit tunnel on the outside of the subunit. This is Large ribosomal subunit protein uL29 (rpmC) from Deinococcus radiodurans (strain ATCC 13939 / DSM 20539 / JCM 16871 / CCUG 27074 / LMG 4051 / NBRC 15346 / NCIMB 9279 / VKM B-1422 / R1).